Consider the following 523-residue polypeptide: Glycerate kinase (523 aa).

Position 60 is a phosphoserine (Ser-60). The residue at position 200 (Lys-200) is an N6-acetyllysine.

This sequence belongs to the glycerate kinase type-2 family.

It localises to the cytoplasm. The catalysed reaction is (R)-glycerate + ATP = (2R)-3-phosphoglycerate + ADP + H(+). This Bos taurus (Bovine) protein is Glycerate kinase (GLYCTK).